The primary structure comprises 329 residues: UDP-glucose 4-epimerase (329 aa).

Residues 13–14 (YV), 33–38 (HNLSTG), 53–54 (DI), 76–80 (FAAFS), N95, T120, Y144, K148, and F172 contribute to the NAD(+) site. Substrate is bound by residues T120 and Y144. The active-site Proton acceptor is Y144. Residues N173, 190 to 191 (HL), 207 to 209 (SVY), R221, and 281 to 284 (RGRD) each bind substrate.

This sequence belongs to the NAD(P)-dependent epimerase/dehydratase family. As to quaternary structure, homodimer. NAD(+) is required as a cofactor.

It catalyses the reaction UDP-alpha-D-glucose = UDP-alpha-D-galactose. It functions in the pathway carbohydrate metabolism; galactose metabolism. In terms of biological role, involved in the metabolism of galactose. Catalyzes the conversion of UDP-galactose (UDP-Gal) to UDP-glucose (UDP-Glc) through a mechanism involving the transient reduction of NAD. In Streptomyces lividans, this protein is UDP-glucose 4-epimerase (galE).